The primary structure comprises 506 residues: Allantoinase (506 aa).

Zn(2+)-binding residues include His-105, His-107, Lys-195, His-231, His-292, and Asp-366. Lys-195 is modified (N6-carboxylysine).

This sequence belongs to the metallo-dependent hydrolases superfamily. Allantoinase family. In terms of assembly, homotetramer. It depends on Zn(2+) as a cofactor. Post-translationally, carboxylation allows a single lysine to coordinate two zinc ions.

It catalyses the reaction (S)-allantoin + H2O = allantoate + H(+). It functions in the pathway nitrogen metabolism; (S)-allantoin degradation; allantoate from (S)-allantoin: step 1/1. In terms of biological role, catalyzes the conversion of allantoin (5-ureidohydantoin) to allantoate by hydrolytic cleavage of the five-member hydantoin ring. Catalyzes the first step of the ureide allantoin degradation followed by the sequential activity of AAH, UGLYAH and UAH which allows a complete purine breakdown without the intermediate generation of urea. This chain is Allantoinase (ALN), found in Arabidopsis thaliana (Mouse-ear cress).